Consider the following 1098-residue polypeptide: Tudor domain-containing protein 7 (1098 aa).

HTH OST-type domains lie at 3–76 (EADL…YAVA) and 233–302 (KMDE…YPAK). Position 319 is a phosphoserine (S319). Positions 337 to 406 (MPGDFKEKVA…PQKAILYAKL (70 aa)) constitute an HTH OST-type 3 domain. 2 Tudor domains span residues 513-570 (TVQI…FCSL) and 703-760 (LPFC…FLQE). S859 is subject to Phosphoserine. The interval 861–1098 (NTKSANTPIL…EYLVELSKVN (238 aa)) is interaction with CDK17. Positions 893 to 1098 (PSSFFTKELP…EYLVELSKVN (206 aa)) are interaction with CABLES1.

Belongs to the TDRD7 family. In terms of assembly, found in a mRNP complex, at least composed of TDRD1, TDRD6, TDRD7 and DDX4. Found in a complex containing CABLES1, CDK16 and CDK17. Interacts with CABLES1, CDK17 and PIWIL1.

The protein localises to the cytoplasm. In terms of biological role, component of specific cytoplasmic RNA granules involved in post-transcriptional regulation of specific genes: probably acts by binding to specific mRNAs and regulating their translation. Required for lens transparency during lens development, by regulating translation of genes such as CRYBB3 and HSPB1 in the developing lens. Also required during spermatogenesis. The chain is Tudor domain-containing protein 7 (TDRD7) from Bos taurus (Bovine).